The primary structure comprises 338 residues: Phenylalanine--tRNA ligase alpha subunit (338 aa).

E253 contributes to the Mg(2+) binding site.

It belongs to the class-II aminoacyl-tRNA synthetase family. Phe-tRNA synthetase alpha subunit type 1 subfamily. In terms of assembly, tetramer of two alpha and two beta subunits. Mg(2+) is required as a cofactor.

The protein resides in the cytoplasm. It catalyses the reaction tRNA(Phe) + L-phenylalanine + ATP = L-phenylalanyl-tRNA(Phe) + AMP + diphosphate + H(+). This is Phenylalanine--tRNA ligase alpha subunit from Syntrophus aciditrophicus (strain SB).